The following is a 219-amino-acid chain: Ribose-5-phosphate isomerase A (219 aa).

Residues 28-31, 81-84, and 94-97 contribute to the substrate site; these read SGST, DGAD, and KGGG. The active-site Proton acceptor is Glu103. Lys121 contributes to the substrate binding site.

This sequence belongs to the ribose 5-phosphate isomerase family. Homodimer.

It catalyses the reaction aldehydo-D-ribose 5-phosphate = D-ribulose 5-phosphate. The protein operates within carbohydrate degradation; pentose phosphate pathway; D-ribose 5-phosphate from D-ribulose 5-phosphate (non-oxidative stage): step 1/1. Functionally, catalyzes the reversible conversion of ribose-5-phosphate to ribulose 5-phosphate. This is Ribose-5-phosphate isomerase A from Haemophilus influenzae (strain PittGG).